The sequence spans 313 residues: Putative phosphoribosylaminoimidazole-succinocarboxamide synthase 2 (313 aa).

The protein belongs to the SAICAR synthetase family.

The catalysed reaction is 5-amino-1-(5-phospho-D-ribosyl)imidazole-4-carboxylate + L-aspartate + ATP = (2S)-2-[5-amino-1-(5-phospho-beta-D-ribosyl)imidazole-4-carboxamido]succinate + ADP + phosphate + 2 H(+). It participates in purine metabolism; IMP biosynthesis via de novo pathway; 5-amino-1-(5-phospho-D-ribosyl)imidazole-4-carboxamide from 5-amino-1-(5-phospho-D-ribosyl)imidazole-4-carboxylate: step 1/2. This chain is Putative phosphoribosylaminoimidazole-succinocarboxamide synthase 2 (purC2), found in Mesorhizobium japonicum (strain LMG 29417 / CECT 9101 / MAFF 303099) (Mesorhizobium loti (strain MAFF 303099)).